Consider the following 368-residue polypeptide: N-acetylneuraminate epimerase 2 (368 aa).

Positions 1–19 (MNKTITALAILMASFAANA) are cleaved as a signal peptide. Kelch repeat units lie at residues 40–84 (TVYI…AFID), 86–137 (NLYV…FVHN), 139–173 (KAYV…KINA), 174–219 (YYFD…VNKG), 222–265 (TWLI…VAGG), 287–336 (ENYQ…LWNN), and 338–367 (LLII…VTVQ). The Proton acceptor role is filled by Glu-228.

This sequence belongs to the NanM family. As to quaternary structure, homodimer.

The protein resides in the periplasm. The enzyme catalyses N-acetyl-alpha-neuraminate = N-acetyl-beta-neuraminate. Functionally, converts alpha-N-acetylneuranimic acid (Neu5Ac) to the beta-anomer, accelerating the equilibrium between the alpha- and beta-anomers. Probably facilitates sialidase-negative bacteria to compete successfully for limited amounts of extracellular Neu5Ac, which is likely taken up in the beta-anomer. In addition, the rapid removal of sialic acid from solution might be advantageous to the bacterium to damp down host responses. This chain is N-acetylneuraminate epimerase 2, found in Escherichia coli O6:H1 (strain CFT073 / ATCC 700928 / UPEC).